We begin with the raw amino-acid sequence, 405 residues long: Imidazolonepropionase (405 aa).

Residues His72 and His74 each contribute to the Fe(3+) site. 2 residues coordinate Zn(2+): His72 and His74. 4-imidazolone-5-propanoate is bound by residues Arg81, Tyr144, and His177. Tyr144 provides a ligand contact to N-formimidoyl-L-glutamate. His242 contributes to the Fe(3+) binding site. His242 is a binding site for Zn(2+). Position 245 (Gln245) interacts with 4-imidazolone-5-propanoate. Asp317 provides a ligand contact to Fe(3+). Residue Asp317 coordinates Zn(2+). The N-formimidoyl-L-glutamate site is built by Asn319 and Gly321. A 4-imidazolone-5-propanoate-binding site is contributed by Thr322.

The protein belongs to the metallo-dependent hydrolases superfamily. HutI family. Zn(2+) serves as cofactor. It depends on Fe(3+) as a cofactor.

The protein resides in the cytoplasm. The enzyme catalyses 4-imidazolone-5-propanoate + H2O = N-formimidoyl-L-glutamate. Its pathway is amino-acid degradation; L-histidine degradation into L-glutamate; N-formimidoyl-L-glutamate from L-histidine: step 3/3. Its function is as follows. Catalyzes the hydrolytic cleavage of the carbon-nitrogen bond in imidazolone-5-propanoate to yield N-formimidoyl-L-glutamate. It is the third step in the universal histidine degradation pathway. In Klebsiella pneumoniae subsp. pneumoniae (strain ATCC 700721 / MGH 78578), this protein is Imidazolonepropionase.